We begin with the raw amino-acid sequence, 459 residues long: uncharacterized protein (459 aa).

Zn(2+) is bound at residue histidine 79. Glutamate 82 serves as the catalytic Proton acceptor. The Zn(2+) site is built by histidine 83 and glutamate 159.

Belongs to the peptidase M16 family. The cofactor is Zn(2+).

This is an uncharacterized protein from Streptomyces coelicolor (strain ATCC BAA-471 / A3(2) / M145).